We begin with the raw amino-acid sequence, 195 residues long: Phosphoheptose isomerase (195 aa).

The SIS domain maps to 36–195; it reads VSKVLQSGNT…IVEYNLFKME (160 aa). 51 to 53 serves as a coordination point for substrate; that stretch reads NGG. Residues His60 and Glu64 each contribute to the Zn(2+) site. Residues Glu64, 95–96, 121–123, Ser126, and Gln173 each bind substrate; these read ND and STS. Zn(2+)-binding residues include Gln173 and His181.

This sequence belongs to the SIS family. GmhA subfamily. It depends on Zn(2+) as a cofactor.

The protein resides in the cytoplasm. It catalyses the reaction 2 D-sedoheptulose 7-phosphate = D-glycero-alpha-D-manno-heptose 7-phosphate + D-glycero-beta-D-manno-heptose 7-phosphate. The protein operates within carbohydrate biosynthesis; D-glycero-D-manno-heptose 7-phosphate biosynthesis; D-glycero-alpha-D-manno-heptose 7-phosphate and D-glycero-beta-D-manno-heptose 7-phosphate from sedoheptulose 7-phosphate: step 1/1. Its function is as follows. Catalyzes the isomerization of sedoheptulose 7-phosphate in D-glycero-D-manno-heptose 7-phosphate. This is Phosphoheptose isomerase from Leptospira borgpetersenii serovar Hardjo-bovis (strain JB197).